The following is a 443-amino-acid chain: ATP-dependent protease ATPase subunit HslU (443 aa).

ATP contacts are provided by residues I18, G60–E65, D256, E321, and R393.

It belongs to the ClpX chaperone family. HslU subfamily. As to quaternary structure, a double ring-shaped homohexamer of HslV is capped on each side by a ring-shaped HslU homohexamer. The assembly of the HslU/HslV complex is dependent on binding of ATP.

The protein localises to the cytoplasm. Its function is as follows. ATPase subunit of a proteasome-like degradation complex; this subunit has chaperone activity. The binding of ATP and its subsequent hydrolysis by HslU are essential for unfolding of protein substrates subsequently hydrolyzed by HslV. HslU recognizes the N-terminal part of its protein substrates and unfolds these before they are guided to HslV for hydrolysis. In Edwardsiella ictaluri (strain 93-146), this protein is ATP-dependent protease ATPase subunit HslU.